Here is a 624-residue protein sequence, read N- to C-terminus: Glutamine--fructose-6-phosphate aminotransferase [isomerizing] (624 aa).

The active-site Nucleophile; for GATase activity is Cys2. The Glutamine amidotransferase type-2 domain maps to 2-225 (CGIVGYVGRR…QDQAVVITAD (224 aa)). SIS domains follow at residues 297–436 (SDQE…ARGT) and 469–614 (LAHR…VDKP). Catalysis depends on Lys619, which acts as the For Fru-6P isomerization activity.

In terms of assembly, homodimer.

The protein localises to the cytoplasm. The catalysed reaction is D-fructose 6-phosphate + L-glutamine = D-glucosamine 6-phosphate + L-glutamate. Functionally, catalyzes the first step in hexosamine metabolism, converting fructose-6P into glucosamine-6P using glutamine as a nitrogen source. The chain is Glutamine--fructose-6-phosphate aminotransferase [isomerizing] from Mycobacterium bovis (strain ATCC BAA-935 / AF2122/97).